The sequence spans 261 residues: uncharacterized protein (261 aa).

His7, His9, Glu96, His132, His156, and Asp211 together coordinate a divalent metal cation.

It belongs to the metallo-dependent hydrolases superfamily. TatD-type hydrolase family. The cofactor is a divalent metal cation.

This is an uncharacterized protein from Mycoplasma pneumoniae (strain ATCC 29342 / M129 / Subtype 1) (Mycoplasmoides pneumoniae).